The sequence spans 127 residues: Large ribosomal subunit protein bL17 (127 aa).

It belongs to the bacterial ribosomal protein bL17 family. As to quaternary structure, part of the 50S ribosomal subunit. Contacts protein L32.

In Limosilactobacillus reuteri (strain DSM 20016) (Lactobacillus reuteri), this protein is Large ribosomal subunit protein bL17.